We begin with the raw amino-acid sequence, 419 residues long: Transcription factor IIIB 50 kDa subunit (419 aa).

The segment at 2-36 (PGRGRCPDCGSTELVEDSHYSQSQLVCSDCGCVVT) adopts a TFIIB-type zinc-finger fold. Zn(2+) contacts are provided by cysteine 7, cysteine 10, cysteine 28, and cysteine 31. Repeat copies occupy residues 72–157 (GLRR…MQIV) and 173–249 (VKTY…SLAR). The interval 108–114 (AARLQKK) is interaction with target DNA. Over residues 314 to 326 (DGTAEVETREKEP) the composition is skewed to basic and acidic residues. The disordered stretch occupies residues 314-351 (DGTAEVETREKEPPGWGQGQGEGEVGNNSLGLPQGKRP). Serine 353 carries the phosphoserine modification. The interval 357 to 363 (LLPPCML) is required for the formation of a ternary complex with DNA and TBP; not required for interaction with TBP in the absence of DNA. Position 361 is a cysteine sulfenic acid (-SOH) (cysteine 361). Residues 365–419 (SPKRICPVPPVSTVTGDENISDSEIEQYLRTPQEVRDFQRAQAARQAATSVPNPP) are required for interaction with TBP and formation of a ternary complex with DNA and TBP.

Belongs to the TFIIB family. As to quaternary structure, component of TFIIIB complexes. The TFIIIB complex has two activities, alpha and beta. The TFIIIB-alpha activity complex is composed of TBP, BDP1, and a complex containing both BRF2 and at least four stably associated proteins; this complex inhibits the transcription by pol III via its phosphorylation by CK2; YY1 facilitates the TFIIIB-alpha complex formation. Interacts with TBP; this interaction promotes recruitment of BRF2 to TATA box-containing promoters. Interacts with TBP and the BURE sequence (GC-rich sequence downstream from the TATA box) to form a strong ternary complex which is joined by BDP1; this ternary complex stimulates pol III transcription. Forms a trimeric complex composed of TBP, BRF2 and mini-SNAPc complex (SNAP43, SNAP50, and the N-terminal third of SNAP190) on the promoter. Assembly of the TBP-BRF2 complex is stimulated by SNAP190. Interacts with MAF1 and SNAPC4. Post-translationally, in response to oxidative stress, Cys-361 is reversibly oxidized to cysteine sulfenic acid. Oxidation of Cys-361 impairs formation of a ternary complex with TBP and DNA and down-regulates expression of target genes in response to oxidative stress.

Its subcellular location is the nucleus. General activator of RNA polymerase III transcription. Factor exclusively required for RNA polymerase III transcription of genes with promoter elements upstream of the initiation sites. Contributes to the regulation of gene expression; functions as activator in the absence of oxidative stress. Down-regulates expression of target genes in response to oxidative stress. Overexpression protects cells against apoptosis in response to oxidative stress. This is Transcription factor IIIB 50 kDa subunit (BRF2) from Homo sapiens (Human).